Here is a 119-residue protein sequence, read N- to C-terminus: NADH-quinone oxidoreductase subunit A (119 aa).

The next 3 helical transmembrane spans lie at 7 to 27 (FPVL…MSIG), 63 to 83 (LIAI…PWGV), and 88 to 108 (IGWP…VGFV).

It belongs to the complex I subunit 3 family. In terms of assembly, NDH-1 is composed of 14 different subunits. Subunits NuoA, H, J, K, L, M, N constitute the membrane sector of the complex.

The protein resides in the cell inner membrane. The catalysed reaction is a quinone + NADH + 5 H(+)(in) = a quinol + NAD(+) + 4 H(+)(out). NDH-1 shuttles electrons from NADH, via FMN and iron-sulfur (Fe-S) centers, to quinones in the respiratory chain. The immediate electron acceptor for the enzyme in this species is believed to be ubiquinone. Couples the redox reaction to proton translocation (for every two electrons transferred, four hydrogen ions are translocated across the cytoplasmic membrane), and thus conserves the redox energy in a proton gradient. The protein is NADH-quinone oxidoreductase subunit A of Cupriavidus pinatubonensis (strain JMP 134 / LMG 1197) (Cupriavidus necator (strain JMP 134)).